A 348-amino-acid chain; its full sequence is Neuronal growth regulator 1 (348 aa).

The N-terminal stretch at 1-31 (MVLLAQGACCSNQWLAAVLLSLCSCLPAGQS) is a signal peptide. Ig-like C2-type domains follow at residues 32–128 (VDFP…VHLT), 133–215 (PKIY…RVVV), and 219–307 (PTIQ…LPLN). A disulfide bridge links cysteine 54 with cysteine 112. Asparagine 67 and asparagine 149 each carry an N-linked (GlcNAc...) asparagine glycan. 2 disulfide bridges follow: cysteine 154–cysteine 197 and cysteine 239–cysteine 291. Residue tyrosine 181 is modified to Phosphotyrosine. Asparagine 269, asparagine 280, asparagine 288, and asparagine 301 each carry an N-linked (GlcNAc...) asparagine glycan. Glycine 318 is lipidated: GPI-anchor amidated glycine. A propeptide spans 319–348 (SACDLFSCWSLALTLSSVISIFYLKNAILQ) (removed in mature form).

Belongs to the immunoglobulin superfamily. IgLON family. Post-translationally, glycosylated. In terms of tissue distribution, highly expressed in brain.

It localises to the cell membrane. In terms of biological role, may be involved in cell-adhesion. May function as a trans-neural growth-promoting factor in regenerative axon sprouting in the mammalian brain. The polypeptide is Neuronal growth regulator 1 (Negr1) (Rattus norvegicus (Rat)).